The following is a 272-amino-acid chain: Dermonecrotic toxin SpeSicTox-betaIB1a (272 aa).

H5 is a catalytic residue. Mg(2+) contacts are provided by E25 and D27. Residue H41 is the Nucleophile of the active site. 2 disulfide bridges follow: C45/C51 and C47/C191. Residue D85 participates in Mg(2+) binding.

This sequence belongs to the arthropod phospholipase D family. Class II subfamily. Mg(2+) is required as a cofactor. As to expression, expressed by the venom gland.

It is found in the secreted. It catalyses the reaction an N-(acyl)-sphingosylphosphocholine = an N-(acyl)-sphingosyl-1,3-cyclic phosphate + choline. It carries out the reaction an N-(acyl)-sphingosylphosphoethanolamine = an N-(acyl)-sphingosyl-1,3-cyclic phosphate + ethanolamine. The enzyme catalyses a 1-acyl-sn-glycero-3-phosphocholine = a 1-acyl-sn-glycero-2,3-cyclic phosphate + choline. The catalysed reaction is a 1-acyl-sn-glycero-3-phosphoethanolamine = a 1-acyl-sn-glycero-2,3-cyclic phosphate + ethanolamine. Dermonecrotic toxins cleave the phosphodiester linkage between the phosphate and headgroup of certain phospholipids (sphingolipid and lysolipid substrates), forming an alcohol (often choline) and a cyclic phosphate. This toxin acts on sphingomyelin (SM). It may also act on ceramide phosphoethanolamine (CPE), lysophosphatidylcholine (LPC) and lysophosphatidylethanolamine (LPE), but not on lysophosphatidylserine (LPS), and lysophosphatidylglycerol (LPG). It acts by transphosphatidylation, releasing exclusively cyclic phosphate products as second products. Induces dermonecrosis, hemolysis, increased vascular permeability, edema, inflammatory response, and platelet aggregation. The polypeptide is Dermonecrotic toxin SpeSicTox-betaIB1a (Sicarius peruensis (Six-eyed sand spider)).